Here is a 687-residue protein sequence, read N- to C-terminus: MERVNDASCGPSGCYTYQVSRHSTEMLHNLNQQRKNGGRFCDVLLRVGDESFPAHRAVLAACSEYFESVFSAQLGDGGAADGGPADVGGAAAAPGGGAGGSRELEMHTISSKVFGDILDFAYTSRIVVRLESFPELMTAAKFLLMRSVIEICQEVIKQSNVQILVPPARADIMLFRPPGTSDLGFPLDMTNGAAMAANSNGIAGSMQPEEEAARATGAAIAGQASLPVLPGVDRLPMVAGPLSPQLLTSPFPNVASSAPPLTSKRGRGRPRKANLLDSMFGSPGGLREAGILPCGLCGKVFTDANRLRQHEAQHGVTSLQLGYIDLPPPRLGENGLPISEDPDGPRKRSRTRKQVACEICGKIFRDVYHLNRHKLSHSGEKPYSCPVCGLRFKRKDRMSYHVRSHDGSVGKPYICQSCGKGFSRPDHLNGHIKQVHTSERPHKCQTCNASFATRDRLRSHLACHEDKVPCQVCGKYLRAAYMADHLKKHSEGPSNFCSICNRGFSSASYLKVHVKTHHGVPLPQVSRHQEPILNGGAAFHCARTYGNKEGQKCSHQDLIESSDSYGDLSDASDLKTPEKQSANGSFSCDVAVPKNKMESDGEKKYPCPECGSFFRSKSYLNKHIQKVHVRALGGPLGDLGPALGSPFSPQQNMSLLESFGFQIVQSAFASSLVDPEVDQQPMGPEGK.

A BTB domain is found at 41–130 (CDVLLRVGDE…AYTSRIVVRL (90 aa)). The span at 250-260 (PFPNVASSAPP) shows a compositional bias: polar residues. Positions 250 to 279 (PFPNVASSAPPLTSKRGRGRPRKANLLDSM) are disordered. The C2H2-type 1 zinc-finger motif lies at 292 to 314 (LPCGLCGKVFTDANRLRQHEAQH). The segment at 332 to 351 (GENGLPISEDPDGPRKRSRT) is disordered. C2H2-type zinc fingers lie at residues 355 to 377 (VACE…KLSH), 383 to 405 (YSCP…VRSH), 413 to 436 (YICQ…KQVH), 442 to 464 (HKCQ…LACH), and 495 to 517 (NFCS…VKTH). The tract at residues 564–587 (SYGDLSDASDLKTPEKQSANGSFS) is disordered. The C2H2-type 7 zinc finger occupies 605–628 (YPCPECGSFFRSKSYLNKHIQKVH).

As to quaternary structure, homodimer. Interacts with RNF4. Interacts (via C-terminus) with TP53; this interaction inhibits TP53 ability to activate transcription. As to expression, widely expressed at high levels during embryogenesis, especially in the central nervous system, especially to the actively proliferating neuroblasts in the periventricular neocortical neuroepithelium, in the telencephalic cortical plate and in the hippocampus. Also expressed in a stage-specific manner in the mouse germinal epithelium. While strongly expressed during brain development,m its expression turns down in adult brain.

The protein localises to the nucleus. In terms of biological role, transcriptional regulator that plays a role in many biological processes such as embryogenesis, senescence, T-cell development or neurogenesis. Interacts with the TP53 protein to control genes that are important in proliferation and in the DNA-damage response. Mechanistically, the interaction inhibits the DNA binding and transcriptional activity of TP53/p53. Part of the transcriptional network modulating regulatory T-cell development and controls the generation of the regulatory T-cell pool under homeostatic conditions. This chain is POZ (BTB) and AT hook-containing zinc finger 1, found in Mus musculus (Mouse).